A 391-amino-acid polypeptide reads, in one-letter code: Na(+)/H(+) antiporter NhaA (391 aa).

11 helical membrane-spanning segments follow: residues A14–L34, L59–V79, S95–F115, V124–L144, V154–F174, T177–L197, L213–I233, F261–L281, I292–V312, V331–I351, and L363–V383.

The protein belongs to the NhaA Na(+)/H(+) (TC 2.A.33) antiporter family.

Its subcellular location is the cell inner membrane. It catalyses the reaction Na(+)(in) + 2 H(+)(out) = Na(+)(out) + 2 H(+)(in). Its function is as follows. Na(+)/H(+) antiporter that extrudes sodium in exchange for external protons. This is Na(+)/H(+) antiporter NhaA from Shewanella loihica (strain ATCC BAA-1088 / PV-4).